Reading from the N-terminus, the 247-residue chain is ATP synthase subunit a, chloroplastic (247 aa).

A run of 5 helical transmembrane segments spans residues 38-58 (QVLITSWVVIAILLGSATVAV), 95-115 (VPFIGTMFLFIFVSNWSGALL), 134-154 (INTTVALALPTSVAYFYAGLT), 199-219 (LVVVVLVSLVPSVVPIPVMFL), and 220-240 (GLFTSGIQALIFATLAAAYIG).

Belongs to the ATPase A chain family. In terms of assembly, F-type ATPases have 2 components, CF(1) - the catalytic core - and CF(0) - the membrane proton channel. CF(1) has five subunits: alpha(3), beta(3), gamma(1), delta(1), epsilon(1). CF(0) has four main subunits: a, b, b' and c.

Its subcellular location is the plastid. It localises to the chloroplast thylakoid membrane. Its function is as follows. Key component of the proton channel; it plays a direct role in the translocation of protons across the membrane. This chain is ATP synthase subunit a, chloroplastic, found in Platanus occidentalis (Sycamore).